Here is a 130-residue protein sequence, read N- to C-terminus: Protein YoeA (130 aa).

An N-terminal signal peptide occupies residues 1–28 (MLYNIPCRIYILSTLSLCISGIVSTATA). The TBDR plug domain occupies 51–130 (NLWESPATIQ…RCRRYSRGER (80 aa)).

Belongs to the TonB-dependent receptor family.

This is Protein YoeA (yoeA) from Escherichia coli (strain K12).